The primary structure comprises 500 residues: Probable cytosol aminopeptidase (500 aa).

Mn(2+)-binding residues include Lys268 and Asp273. Lys280 is an active-site residue. The Mn(2+) site is built by Asp291, Asp350, and Glu352. Arg354 is an active-site residue.

Belongs to the peptidase M17 family. It depends on Mn(2+) as a cofactor.

The protein resides in the cytoplasm. It carries out the reaction Release of an N-terminal amino acid, Xaa-|-Yaa-, in which Xaa is preferably Leu, but may be other amino acids including Pro although not Arg or Lys, and Yaa may be Pro. Amino acid amides and methyl esters are also readily hydrolyzed, but rates on arylamides are exceedingly low.. The enzyme catalyses Release of an N-terminal amino acid, preferentially leucine, but not glutamic or aspartic acids.. Presumably involved in the processing and regular turnover of intracellular proteins. Catalyzes the removal of unsubstituted N-terminal amino acids from various peptides. This Alkaliphilus metalliredigens (strain QYMF) protein is Probable cytosol aminopeptidase.